The chain runs to 548 residues: Eukaryotic translation initiation factor 3 subunit D (548 aa).

At Lys-53 the chain carries N6-acetyllysine. Ser-161 is subject to Phosphoserine. Residues 285–299 (DFDLLTVSETANEPP) are RNA gate. Residues 523-548 (PDGTFSSDEDDEEEEEEEEEEEEEEA) form a disordered region. Phosphoserine is present on residues Ser-528 and Ser-529. Residues 529 to 548 (SDEDDEEEEEEEEEEEEEEA) are compositionally biased toward acidic residues.

It belongs to the eIF-3 subunit D family. As to quaternary structure, component of the eukaryotic translation initiation factor 3 (eIF-3) complex, which is composed of 13 subunits: EIF3A, EIF3B, EIF3C, EIF3D, EIF3E, EIF3F, EIF3G, EIF3H, EIF3I, EIF3J, EIF3K, EIF3L and EIF3M. The eIF-3 complex appears to include 3 stable modules: module A is composed of EIF3A, EIF3B, EIF3G and EIF3I; module B is composed of EIF3F, EIF3H, and EIF3M; and module C is composed of EIF3C, EIF3D, EIF3E, EIF3K and EIF3L. EIF3C of module C binds EIF3B of module A and EIF3H of module B, thereby linking the three modules. EIF3J is a labile subunit that binds to the eIF-3 complex via EIF3B. The eIF-3 complex interacts with RPS6KB1 under conditions of nutrient depletion. Mitogenic stimulation leads to binding and activation of a complex composed of MTOR and RPTOR, leading to phosphorylation and release of RPS6KB1 and binding of EIF4B to eIF-3.

Its subcellular location is the cytoplasm. In terms of biological role, mRNA cap-binding component of the eukaryotic translation initiation factor 3 (eIF-3) complex, a complex required for several steps in the initiation of protein synthesis of a specialized repertoire of mRNAs. The eIF-3 complex associates with the 40S ribosome and facilitates the recruitment of eIF-1, eIF-1A, eIF-2:GTP:methionyl-tRNAi and eIF-5 to form the 43S pre-initiation complex (43S PIC). The eIF-3 complex stimulates mRNA recruitment to the 43S PIC and scanning of the mRNA for AUG recognition. The eIF-3 complex is also required for disassembly and recycling of post-termination ribosomal complexes and subsequently prevents premature joining of the 40S and 60S ribosomal subunits prior to initiation. The eIF-3 complex specifically targets and initiates translation of a subset of mRNAs involved in cell proliferation, including cell cycling, differentiation and apoptosis, and uses different modes of RNA stem-loop binding to exert either translational activation or repression. In the eIF-3 complex, EIF3D specifically recognizes and binds the 7-methylguanosine cap of a subset of mRNAs. The polypeptide is Eukaryotic translation initiation factor 3 subunit D (Bos taurus (Bovine)).